Here is a 620-residue protein sequence, read N- to C-terminus: Glutathione-regulated potassium-efflux system protein KefC (620 aa).

Helical transmembrane passes span 4–24, 26–46, 54–74, 90–110, 114–134, 149–169, 178–198, 218–238, 270–290, 294–314, 327–347, and 359–379; these read HTLI…PIAV, LGLG…PWGL, SILH…GLEL, GALQ…LLGL, VAEL…MQAM, FAVL…IPLL, MGAF…VVLL, VFSA…EEVG, GLLL…GTLI, LRIV…LWLI, WFAV…GAAQ, and SLTL…VILN. Residues 399–518 enclose the RCK N-terminal domain; it reads QPRVIIAGFG…AGVEKPERET (120 aa). Positions 597 to 620 are disordered; sequence GWQGTEEGKHTGNMADEPETKPSS.

This sequence belongs to the monovalent cation:proton antiporter 2 (CPA2) transporter (TC 2.A.37) family. KefC subfamily. In terms of assembly, homodimer. Interacts with the regulatory subunit KefF.

It is found in the cell inner membrane. Functionally, pore-forming subunit of a potassium efflux system that confers protection against electrophiles. Catalyzes K(+)/H(+) antiport. The sequence is that of Glutathione-regulated potassium-efflux system protein KefC from Escherichia coli (strain SMS-3-5 / SECEC).